A 318-amino-acid chain; its full sequence is NADH-ubiquinone oxidoreductase chain 1 (318 aa).

8 helical membrane passes run 3–23 (TMNL…LTLV), 69–89 (ILYI…WTPL), 98–118 (FNLG…SILW), 135–155 (AVAQ…SILL), 171–191 (HLWL…STLA), 217–237 (AGPF…MNAL), 253–273 (ELFT…FLWI), and 294–314 (LPLT…ISSI).

The protein belongs to the complex I subunit 1 family. In terms of assembly, core subunit of respiratory chain NADH dehydrogenase (Complex I) which is composed of 45 different subunits.

Its subcellular location is the mitochondrion inner membrane. The catalysed reaction is a ubiquinone + NADH + 5 H(+)(in) = a ubiquinol + NAD(+) + 4 H(+)(out). In terms of biological role, core subunit of the mitochondrial membrane respiratory chain NADH dehydrogenase (Complex I) which catalyzes electron transfer from NADH through the respiratory chain, using ubiquinone as an electron acceptor. Essential for the catalytic activity and assembly of complex I. This chain is NADH-ubiquinone oxidoreductase chain 1 (MT-ND1), found in Papio hamadryas (Hamadryas baboon).